The primary structure comprises 239 residues: MSSVFDIDSVVLDIEGTTSATGFVVDVLYPYSRSRFGALLTERSGDPEVARAVAQVRELLGEPDADAVRVEKALNEWLDDDRKATPLKTLQGLVWSEGFARGELVSHFYDDVVPALRAWHAAGVRLHVYSSGSVAAQRAWFRSSPEGDLLPLVEGLYDTENAGPKQEPESYRTIAAALGTGADRILFLSDRPGELDAARAAGWRTVGVRRPGEPYYEQGVGDHAQAGSFGGITIARSTA.

It belongs to the HAD-like hydrolase superfamily. MasA/MtnC family. Monomer. Mg(2+) serves as cofactor.

The enzyme catalyses 5-methylsulfanyl-2,3-dioxopentyl phosphate + H2O = 1,2-dihydroxy-5-(methylsulfanyl)pent-1-en-3-one + phosphate. It functions in the pathway amino-acid biosynthesis; L-methionine biosynthesis via salvage pathway; L-methionine from S-methyl-5-thio-alpha-D-ribose 1-phosphate: step 3/6. It participates in amino-acid biosynthesis; L-methionine biosynthesis via salvage pathway; L-methionine from S-methyl-5-thio-alpha-D-ribose 1-phosphate: step 4/6. Bifunctional enzyme that catalyzes the enolization of 2,3-diketo-5-methylthiopentyl-1-phosphate (DK-MTP-1-P) into the intermediate 2-hydroxy-3-keto-5-methylthiopentenyl-1-phosphate (HK-MTPenyl-1-P), which is then dephosphorylated to form the acireductone 1,2-dihydroxy-3-keto-5-methylthiopentene (DHK-MTPene). The chain is Enolase-phosphatase E1 from Streptomyces avermitilis (strain ATCC 31267 / DSM 46492 / JCM 5070 / NBRC 14893 / NCIMB 12804 / NRRL 8165 / MA-4680).